A 110-amino-acid polypeptide reads, in one-letter code: Large ribosomal subunit protein uL22 (110 aa).

Belongs to the universal ribosomal protein uL22 family. Part of the 50S ribosomal subunit.

Functionally, this protein binds specifically to 23S rRNA; its binding is stimulated by other ribosomal proteins, e.g. L4, L17, and L20. It is important during the early stages of 50S assembly. It makes multiple contacts with different domains of the 23S rRNA in the assembled 50S subunit and ribosome. Its function is as follows. The globular domain of the protein is located near the polypeptide exit tunnel on the outside of the subunit, while an extended beta-hairpin is found that lines the wall of the exit tunnel in the center of the 70S ribosome. In Alkaliphilus metalliredigens (strain QYMF), this protein is Large ribosomal subunit protein uL22.